We begin with the raw amino-acid sequence, 138 residues long: NADH dehydrogenase [ubiquinone] iron-sulfur protein 2, mitochondrial (138 aa).

Belongs to the complex I 49 kDa subunit family. As to quaternary structure, core subunit of respiratory chain NADH dehydrogenase (Complex I) which is composed of 45 different subunits. Component of the iron-sulfur (IP) fragment of the enzyme. Interacts with NDUFAF3. Interacts with NDUFAF7. Interacts with CERS2. [4Fe-4S] cluster serves as cofactor. Post-translationally, dimethylation at Arg-118 by NDUFAF7 takes place after NDUFS2 assembles into the complex I, leading to stabilize the early intermediate complex.

The protein localises to the mitochondrion inner membrane. The catalysed reaction is a ubiquinone + NADH + 5 H(+)(in) = a ubiquinol + NAD(+) + 4 H(+)(out). Core subunit of the mitochondrial membrane respiratory chain NADH dehydrogenase (Complex I) which catalyzes electron transfer from NADH through the respiratory chain, using ubiquinone as an electron acceptor. Essential for the catalytic activity and assembly of complex I. Redox-sensitive, critical component of the oxygen-sensing pathway in the pulmonary vasculature which plays a key role in acute pulmonary oxygen-sensing and hypoxic pulmonary vasoconstriction. Plays an important role in carotid body sensing of hypoxia. Essential for glia-like neural stem and progenitor cell proliferation, differentiation and subsequent oligodendrocyte or neuronal maturation. The chain is NADH dehydrogenase [ubiquinone] iron-sulfur protein 2, mitochondrial from Mesocricetus auratus (Golden hamster).